A 207-amino-acid polypeptide reads, in one-letter code: Probable GTP-binding protein EngB (207 aa).

The EngB-type G domain maps to 24 to 199; it reads GGYEVAFAGR…RAIVGAWLGL (176 aa). Residues 32–39, 59–63, 77–80, 144–147, and 178–180 each bind GTP; these read GRSNAGKS, GRTQQ, DLPG, TKAD, and YSG. 2 residues coordinate Mg(2+): Ser-39 and Thr-61.

It belongs to the TRAFAC class TrmE-Era-EngA-EngB-Septin-like GTPase superfamily. EngB GTPase family. The cofactor is Mg(2+).

In terms of biological role, necessary for normal cell division and for the maintenance of normal septation. In Xanthomonas euvesicatoria pv. vesicatoria (strain 85-10) (Xanthomonas campestris pv. vesicatoria), this protein is Probable GTP-binding protein EngB.